A 168-amino-acid chain; its full sequence is Profilin-3 (168 aa).

The segment at 14–36 (LSLEHSDKPQRRSRAKVKKKKKT) is disordered. The segment covering 24–36 (RRSRAKVKKKKKT) has biased composition (basic residues).

Belongs to the profilin family. In terms of assembly, occurs in many kinds of cells as a complex with monomeric actin in a 1:1 ratio. Binding to the poly-proline motif of formins induces formation of oligomers through the N-terminal hydrophobic residues of PRF3. In terms of tissue distribution, expressed in roots, rosette leaves, cauline leaves, stems and flowers.

It is found in the cytoplasm. The protein resides in the cytoskeleton. Its function is as follows. Binds to actin monomers and regulates the organization of the actin cytoskeleton. Can increase the critical concentration (Cc) of actin assembly in vitro. Acts as a downstream effector of the hydrogen sulfide signaling to regulate the assembly and depolymerization of F-actin. At high concentrations, profilin prevents the polymerization of actin, whereas it enhances it at low concentrations. Binding to the poly-proline motif of formin induces oligomerization of PRF3. PRF3 oligomers inhibit formin-mediated actin assembly to modulate plant immunity triggered by pathogen-associated molecular patterns (PAMPs). In Arabidopsis thaliana (Mouse-ear cress), this protein is Profilin-3.